We begin with the raw amino-acid sequence, 150 residues long: Large ribosomal subunit protein uL11 (150 aa).

Belongs to the universal ribosomal protein uL11 family. Part of the ribosomal stalk of the 50S ribosomal subunit. Interacts with L10 and the large rRNA to form the base of the stalk. L10 forms an elongated spine to which L12 dimers bind in a sequential fashion forming a multimeric L10(L12)X complex. One or more lysine residues are methylated.

In terms of biological role, forms part of the ribosomal stalk which helps the ribosome interact with GTP-bound translation factors. The sequence is that of Large ribosomal subunit protein uL11 from Jannaschia sp. (strain CCS1).